The sequence spans 658 residues: Putative phospholipase B-like lamina ancestor (658 aa).

Positions methionine 1–alanine 29 are cleaved as a signal peptide. N-linked (GlcNAc...) asparagine glycans are attached at residues asparagine 229, asparagine 465, and asparagine 486.

It belongs to the phospholipase B-like family. Expressed in neural and glial progenitors prior to, but not after, differentiation. Not expressed in late third instar disks, but is expressed uniformly by early third instar disks, in the imaginal ring of the proventriculus and in the salivary gland.

Its subcellular location is the secreted. Functionally, putative phospholipase. Involved in the regulation of cellular plasticity in imaginal disks. This is Putative phospholipase B-like lamina ancestor (lama) from Drosophila melanogaster (Fruit fly).